A 208-amino-acid chain; its full sequence is Methyl-CpG-binding domain protein 3-like 5 (208 aa).

This sequence belongs to the MBD3L family.

This is Methyl-CpG-binding domain protein 3-like 5 (MBD3L5) from Homo sapiens (Human).